The sequence spans 1262 residues: SCL-interrupting locus protein homolog (1262 aa).

The segment at 1 to 992 (MNTRFPSSKM…IDSPTKVKKN (992 aa)) is interaction with RBM14. The interaction with CPAP stretch occupies residues 220–762 (YKHGYITMDE…VSMEAQSSPG (543 aa)). Disordered regions lie at residues 369-409 (RSSQ…QKIS), 454-551 (LCDA…LAPQ), and 650-670 (GGMGAYSPHSNGEPSPVAGPS). Polar residues-rich tracts occupy residues 473–493 (PTNQLSQDTALRQSRGKQSST), 500–512 (QFRNTNAKPSLSV), and 540–551 (TLDSRQPSLAPQ). The PIN1-binding stretch occupies residues 567 to 760 (PMELQVPTPS…ELVSMEAQSS (194 aa)). 2 positions are modified to phosphoserine: Ser733 and Ser760. 4 disordered regions span residues 782-804 (NAAGDDQEPDSQPKQDDTKISSE), 883-904 (APTEGASNSTELPQGTKDEPYR), 925-959 (NASQETEEPPTKAVVTNRECAKTQNTHHARKKRHN), and 1106-1129 (SSDNSEDEEEPPSHADSESDHVLN). The span at 792 to 803 (SQPKQDDTKISS) shows a compositional bias: basic and acidic residues. A compositionally biased stretch (polar residues) spans 883-895 (APTEGASNSTELP). The span at 949–959 (NTHHARKKRHN) shows a compositional bias: basic residues. Phosphoserine is present on Ser1110. Residues 1116-1128 (PPSHADSESDHVL) are compositionally biased toward basic and acidic residues.

In terms of assembly, homodimer. Interacts with PIN1 via its WW domain. This interaction is dependent on Stil mitotic phosphorylation. Interacts with CPAP. Interacts with RBM14 and this interaction interferes with the interaction of STIL with CPAP. Forms a complex with CPAP and SASS6. nteracts (via N-terminus) with CEP85; this interaction is essential for efficient centriolar targeting of STIL and subsequent PLK4 activation. Ubiquitinated. In terms of processing, phosphorylated following the activation of the mitotic checkpoint. As to expression, ubiquitously expressed in adult and fetal tissues. Highly expressed in hematopoietic tissues such as thymus, bone marrow and spleen.

It is found in the cytoplasm. The protein resides in the cytosol. The protein localises to the cytoskeleton. It localises to the microtubule organizing center. Its subcellular location is the centrosome. It is found in the centriole. The protein resides in the cell cortex. Its function is as follows. Immediate-early gene. Plays an important role in embryonic development as well as in cellular growth and proliferation; its long-term silencing affects cell survival and cell cycle distribution as well as decreases CDK1 activity correlated with reduced phosphorylation of CDK1. Plays a role as a positive regulator of the sonic hedgehog pathway, acting downstream of PTCH1. Plays an important role in the regulation of centriole duplication. Required for the onset of procentriole formation and proper mitotic progression. During procentriole formation, is essential for the correct loading of SASS6 and CPAP to the base of the procentriole to initiate procentriole assembly. In complex with STIL acts as a modulator of PLK4-driven cytoskeletal rearrangements and directional cell motility. The sequence is that of SCL-interrupting locus protein homolog (Stil) from Mus musculus (Mouse).